The primary structure comprises 78 residues: Large ribosomal subunit protein bL28 (78 aa).

The disordered stretch occupies residues 1–24; that stretch reads MSQVCQVTGKRPVTGNNVSHSQRK.

It belongs to the bacterial ribosomal protein bL28 family.

The chain is Large ribosomal subunit protein bL28 from Chromohalobacter salexigens (strain ATCC BAA-138 / DSM 3043 / CIP 106854 / NCIMB 13768 / 1H11).